Here is a 220-residue protein sequence, read N- to C-terminus: Large ribosomal subunit protein bL21 (220 aa).

Residues Ser109–Pro158 form a disordered region. Basic and acidic residues predominate over residues Thr118–Lys146.

The protein belongs to the bacterial ribosomal protein bL21 family. In terms of assembly, part of the 50S ribosomal subunit. Contacts protein L20.

In terms of biological role, this protein binds to 23S rRNA in the presence of protein L20. The protein is Large ribosomal subunit protein bL21 of Chelativorans sp. (strain BNC1).